Reading from the N-terminus, the 795-residue chain is Glycerol-3-phosphate acyltransferase 2, mitochondrial (795 aa).

Residues 1–21 (MATMLEGRCQTQPRSSPSGRE) are disordered. Topologically, residues 1–305 (MATMLEGRCQ…LGPRLSALGQ (305 aa)) are cytoplasmic. Positions 9 to 18 (CQTQPRSSPS) are enriched in polar residues. Residues 180–331 (QLHKGQMKMV…DALLVPVAVT (152 aa)) are acyltransferase. The short motif at 205–210 (HKTLLD) is the HXXXXD motif element. Residues 306–332 (AWVGFVVQAVQVGIVPDALLVPVAVTY) traverse the membrane as a helical segment. Over 333-449 (DLVPDAPCDI…QLLVRRLSCH (117 aa)) the chain is Mitochondrial intermembrane. Residues 450–472 (VLSASVGSSAVMSTAIMATLLLF) traverse the membrane as a helical segment. Residues 473–795 (KHQKLLGEFS…EQFIRQFICS (323 aa)) are Cytoplasmic-facing. A Phosphoserine modification is found at Ser-656. The residue at position 660 (Thr-660) is a Phosphothreonine. Residues Ser-662 and Ser-664 each carry the phosphoserine modification.

Belongs to the GPAT/DAPAT family. In terms of assembly, interacts with PIWIL2.

The protein localises to the mitochondrion outer membrane. It carries out the reaction sn-glycerol 3-phosphate + an acyl-CoA = a 1-acyl-sn-glycero-3-phosphate + CoA. The enzyme catalyses a 1-acyl-sn-glycero-3-phosphate + an acyl-CoA = a 1,2-diacyl-sn-glycero-3-phosphate + CoA. The catalysed reaction is 1-(9Z-octadecenoyl)-sn-glycero-3-phosphate + (9Z)-octadecenoyl-CoA = 1,2-di-(9Z-octadecenoyl)-sn-glycero-3-phosphate + CoA. It catalyses the reaction 1-(9Z-octadecenoyl)-sn-glycero-3-phosphate + (5Z,8Z,11Z,14Z)-eicosatetraenoyl-CoA = 1-(9Z)-octadecenoyl-2-(5Z,8Z,11Z,14Z)-eicosatetraenoyl-sn-glycero-3-phosphate + CoA. It carries out the reaction (5Z,8Z,11Z,14Z)-eicosatetraenoyl-CoA + sn-glycerol 3-phosphate = 1-(5Z,8Z,11Z,14Z-eicosatetraenoyl)-sn-glycero-3-phosphate + CoA. The protein operates within phospholipid metabolism; CDP-diacylglycerol biosynthesis; CDP-diacylglycerol from sn-glycerol 3-phosphate: step 1/3. With respect to regulation, inhibited by N-ethylmaleimide (NEM). Transfers an acyl-group from acyl-ACP to the sn-1 position of glycerol-3-phosphate producing a lysophosphatidic acid (LPA), an essential step for the triacylglycerol (TAG) and glycerophospholipids. In vitro also transfers an acyl-group from acyl-ACP to the LPA producing a phosphatidic acid (PA). Prefers arachidonoyl-CoA as the acyl donor. Required for primary processing step during piRNA biosynthesis. Molecular mechanisms by which it promotes piRNA biosynthesis are unclear and do not involve its acyltransferase activity. This is Glycerol-3-phosphate acyltransferase 2, mitochondrial from Homo sapiens (Human).